Reading from the N-terminus, the 603-residue chain is Proline--tRNA ligase (603 aa).

The protein belongs to the class-II aminoacyl-tRNA synthetase family. ProS type 1 subfamily. In terms of assembly, homodimer.

Its subcellular location is the cytoplasm. It carries out the reaction tRNA(Pro) + L-proline + ATP = L-prolyl-tRNA(Pro) + AMP + diphosphate. Catalyzes the attachment of proline to tRNA(Pro) in a two-step reaction: proline is first activated by ATP to form Pro-AMP and then transferred to the acceptor end of tRNA(Pro). As ProRS can inadvertently accommodate and process non-cognate amino acids such as alanine and cysteine, to avoid such errors it has two additional distinct editing activities against alanine. One activity is designated as 'pretransfer' editing and involves the tRNA(Pro)-independent hydrolysis of activated Ala-AMP. The other activity is designated 'posttransfer' editing and involves deacylation of mischarged Ala-tRNA(Pro). The misacylated Cys-tRNA(Pro) is not edited by ProRS. The polypeptide is Proline--tRNA ligase (Synechocystis sp. (strain ATCC 27184 / PCC 6803 / Kazusa)).